A 380-amino-acid polypeptide reads, in one-letter code: Chaperone protein DnaJ (380 aa).

The J domain maps to 5–70 (DFYEVLGVSR…QKRAAYDQYG (66 aa)). The CR-type zinc-finger motif lies at 135 to 213 (GCEKDIEIPT…CHGDGRVQKT (79 aa)). Positions 148, 151, 165, 168, 187, 190, 201, and 204 each coordinate Zn(2+). CXXCXGXG motif repeat units lie at residues 148–155 (CEPCDGTG), 165–172 (CSTCHGQG), 187–194 (CPTCHGKG), and 201–208 (CNSCHGDG).

This sequence belongs to the DnaJ family. As to quaternary structure, homodimer. Zn(2+) is required as a cofactor.

It is found in the cytoplasm. Its function is as follows. Participates actively in the response to hyperosmotic and heat shock by preventing the aggregation of stress-denatured proteins and by disaggregating proteins, also in an autonomous, DnaK-independent fashion. Unfolded proteins bind initially to DnaJ; upon interaction with the DnaJ-bound protein, DnaK hydrolyzes its bound ATP, resulting in the formation of a stable complex. GrpE releases ADP from DnaK; ATP binding to DnaK triggers the release of the substrate protein, thus completing the reaction cycle. Several rounds of ATP-dependent interactions between DnaJ, DnaK and GrpE are required for fully efficient folding. Also involved, together with DnaK and GrpE, in the DNA replication of plasmids through activation of initiation proteins. This Aliivibrio salmonicida (strain LFI1238) (Vibrio salmonicida (strain LFI1238)) protein is Chaperone protein DnaJ.